We begin with the raw amino-acid sequence, 232 residues long: LexA repressor (232 aa).

Positions 26 to 46 form a DNA-binding region, H-T-H motif; that stretch reads FDEMKDALDLRSKSGIHRLIT. Residues S153 and K191 each act as for autocatalytic cleavage activity in the active site.

Belongs to the peptidase S24 family. In terms of assembly, homodimer.

The enzyme catalyses Hydrolysis of Ala-|-Gly bond in repressor LexA.. Represses a number of genes involved in the response to DNA damage (SOS response), including recA and lexA. In the presence of single-stranded DNA, RecA interacts with LexA causing an autocatalytic cleavage which disrupts the DNA-binding part of LexA, leading to derepression of the SOS regulon and eventually DNA repair. The polypeptide is LexA repressor (Bradyrhizobium sp. (strain ORS 278)).